A 648-amino-acid chain; its full sequence is Replication restart protein PriA (648 aa).

One can recognise a Helicase ATP-binding domain in the interval 131 to 297; the sequence is TIFNESNKPT…KTHKYQLVTL (167 aa). Residue 144–151 participates in ATP binding; that stretch reads GVTGSGKT. The short motif at 240–243 is the DEAH box element; that stretch reads DEEH. Cysteine 358, cysteine 361, cysteine 367, cysteine 370, cysteine 385, cysteine 388, cysteine 398, and cysteine 401 together coordinate Zn(2+). The region spanning 393–548 is the Helicase C-terminal domain; the sequence is KIFSSCPECL…SFFTNELEIR (156 aa).

This sequence belongs to the helicase family. PriA subfamily. In terms of assembly, component of the replication restart primosome. It depends on Zn(2+) as a cofactor.

The enzyme catalyses Couples ATP hydrolysis with the unwinding of duplex DNA by translocating in the 3'-5' direction.. It catalyses the reaction ATP + H2O = ADP + phosphate + H(+). Functionally, initiates the restart of stalled replication forks, which reloads the replicative helicase on sites other than the origin of replication. Recognizes and binds to abandoned replication forks and remodels them to uncover a helicase loading site. Promotes assembly of the primosome at these replication forks. The polypeptide is Replication restart protein PriA (Rickettsia typhi (strain ATCC VR-144 / Wilmington)).